The following is a 437-amino-acid chain: Ribulose bisphosphate carboxylase/oxygenase activase, chloroplastic (437 aa).

A compositionally biased stretch (polar residues) spans 1-10 (MATAVSTIGS). Residues 1–26 (MATAVSTIGSVNRAPPNLNGSSSSAS) form a disordered region. An ATP-binding site is contributed by 165-172 (GGKGQGKS).

The protein belongs to the RuBisCO activase family.

The protein resides in the plastid. The protein localises to the chloroplast stroma. In terms of biological role, activation of RuBisCO (ribulose-1,5-bisphosphate carboxylase/oxygenase; EC 4.1.1.39) involves the ATP-dependent carboxylation of the epsilon-amino group of lysine leading to a carbamate structure. The sequence is that of Ribulose bisphosphate carboxylase/oxygenase activase, chloroplastic (RCA) from Malus domestica (Apple).